A 456-amino-acid polypeptide reads, in one-letter code: MNVPRETIAAIATAQGRGGVGIVRVSGPLAGKTAQAITGRMPKPRFAHYGPFADESGQVLDEGIALYFPGPNSFTGEDVLELQGHGGPIVLDMLLQRCLQLGSRLARPGEFSERAFLNDKLDLAQAEAIADLIEASSAQAARNALRSLQGVFSQRVDNLTEKLISLRIYVEAAIDFPEEEIDFLADGHVLGMLDDVRAELSTVLREAGQGALLRDGMTVVIAGRPNAGKSSLLNALAGREAAIVTEIAGTTRDVLREHIHIDGMPLHVVDTAGLRDTQDQVEMIGVQRALKAIGEADRILLVVDATAPEAADPFALWPEFLEQRPDPAKVTLIRNKADLSGDSIALQTSADGHVTISLSARSGGEGLELLREHLKACMGYEQTSESSFSARRRHLEALRHASDSLEHGRAQLTLAGAGELLAEDLRQAQQALGEITGAFSSDDLLGRIFSSFCIGK.

Residues R24, E81, and K120 each contribute to the (6S)-5-formyl-5,6,7,8-tetrahydrofolate site. In terms of domain architecture, TrmE-type G spans G216–G379. A K(+)-binding site is contributed by N226. GTP is bound by residues N226 to S231, T245 to T251, D270 to G273, N335 to D338, and S359 to R361. S230 lines the Mg(2+) pocket. K(+)-binding residues include T245, I247, and T250. Residue T251 participates in Mg(2+) binding. K456 provides a ligand contact to (6S)-5-formyl-5,6,7,8-tetrahydrofolate.

Belongs to the TRAFAC class TrmE-Era-EngA-EngB-Septin-like GTPase superfamily. TrmE GTPase family. As to quaternary structure, homodimer. Heterotetramer of two MnmE and two MnmG subunits. K(+) is required as a cofactor.

Its subcellular location is the cytoplasm. Its function is as follows. Exhibits a very high intrinsic GTPase hydrolysis rate. Involved in the addition of a carboxymethylaminomethyl (cmnm) group at the wobble position (U34) of certain tRNAs, forming tRNA-cmnm(5)s(2)U34. The sequence is that of tRNA modification GTPase MnmE from Pseudomonas syringae pv. tomato (strain ATCC BAA-871 / DC3000).